Consider the following 310-residue polypeptide: Probable RuBisCO transcriptional regulator (310 aa).

Positions 6–63 (FTLDQLRILKAIASEGSFKKAAESLYISQPAVSLQIQNLEKQLNIPIFDRANRKAVFT) constitute an HTH lysR-type domain. A DNA-binding region (H-T-H motif) is located at residues 23-42 (FKKAAESLYISQPAVSLQIQ).

Belongs to the LysR transcriptional regulatory family.

The protein localises to the plastid. Its subcellular location is the chloroplast. Its function is as follows. Trans-acting transcriptional regulator of RuBisCO genes (rbcL and rbcS) expression. This chain is Probable RuBisCO transcriptional regulator (rbcR), found in Guillardia theta (Cryptophyte).